We begin with the raw amino-acid sequence, 274 residues long: 4-hydroxy-tetrahydrodipicolinate reductase (274 aa).

7-12 (GVTGRM) contacts NAD(+). Arg40 contacts NADP(+). Residues 103 to 105 (GTT) and 127 to 130 (SANF) contribute to the NAD(+) site. His160 acts as the Proton donor/acceptor in catalysis. His161 provides a ligand contact to (S)-2,3,4,5-tetrahydrodipicolinate. Lys164 serves as the catalytic Proton donor. 170-171 (GT) lines the (S)-2,3,4,5-tetrahydrodipicolinate pocket.

Belongs to the DapB family. In terms of assembly, homotetramer.

It localises to the cytoplasm. The enzyme catalyses (S)-2,3,4,5-tetrahydrodipicolinate + NAD(+) + H2O = (2S,4S)-4-hydroxy-2,3,4,5-tetrahydrodipicolinate + NADH + H(+). The catalysed reaction is (S)-2,3,4,5-tetrahydrodipicolinate + NADP(+) + H2O = (2S,4S)-4-hydroxy-2,3,4,5-tetrahydrodipicolinate + NADPH + H(+). The protein operates within amino-acid biosynthesis; L-lysine biosynthesis via DAP pathway; (S)-tetrahydrodipicolinate from L-aspartate: step 4/4. In terms of biological role, catalyzes the conversion of 4-hydroxy-tetrahydrodipicolinate (HTPA) to tetrahydrodipicolinate. This chain is 4-hydroxy-tetrahydrodipicolinate reductase, found in Blochmanniella floridana.